Consider the following 281-residue polypeptide: 2,3,4,5-tetrahydropyridine-2,6-dicarboxylate N-succinyltransferase (281 aa).

Belongs to the transferase hexapeptide repeat family.

The protein resides in the cytoplasm. The enzyme catalyses (S)-2,3,4,5-tetrahydrodipicolinate + succinyl-CoA + H2O = (S)-2-succinylamino-6-oxoheptanedioate + CoA. It functions in the pathway amino-acid biosynthesis; L-lysine biosynthesis via DAP pathway; LL-2,6-diaminopimelate from (S)-tetrahydrodipicolinate (succinylase route): step 1/3. This chain is 2,3,4,5-tetrahydropyridine-2,6-dicarboxylate N-succinyltransferase, found in Afipia carboxidovorans (strain ATCC 49405 / DSM 1227 / KCTC 32145 / OM5) (Oligotropha carboxidovorans).